We begin with the raw amino-acid sequence, 220 residues long: ATP synthase subunit beta, chloroplastic (220 aa).

It belongs to the ATPase alpha/beta chains family. F-type ATPases have 2 components, CF(1) - the catalytic core - and CF(0) - the membrane proton channel. CF(1) has five subunits: alpha(3), beta(3), gamma(1), delta(1), epsilon(1). CF(0) has four main subunits: a(1), b(1), b'(1) and c(9-12).

It localises to the plastid. The protein localises to the chloroplast thylakoid membrane. The catalysed reaction is ATP + H2O + 4 H(+)(in) = ADP + phosphate + 5 H(+)(out). Produces ATP from ADP in the presence of a proton gradient across the membrane. The catalytic sites are hosted primarily by the beta subunits. In Osmundastrum cinnamomeum (Cinnamon fern), this protein is ATP synthase subunit beta, chloroplastic (atpB).